The following is a 96-amino-acid chain: Protein RnfH (96 aa).

The protein belongs to the UPF0125 (RnfH) family.

The protein is Protein RnfH of Pectobacterium carotovorum subsp. carotovorum (strain PC1).